A 406-amino-acid polypeptide reads, in one-letter code: Cysteine desulfurase (406 aa).

The residue at position 226 (Lys-226) is an N6-(pyridoxal phosphate)lysine. The active-site Cysteine persulfide intermediate is the Cys-364.

Belongs to the class-V pyridoxal-phosphate-dependent aminotransferase family. Csd subfamily. In terms of assembly, homodimer. Interacts with SufE and the SufBCD complex composed of SufB, SufC and SufD. The interaction with SufE is required to mediate the direct transfer of the sulfur atom from the S-sulfanylcysteine. Pyridoxal 5'-phosphate serves as cofactor.

The protein resides in the cytoplasm. It carries out the reaction (sulfur carrier)-H + L-cysteine = (sulfur carrier)-SH + L-alanine. The catalysed reaction is L-selenocysteine + AH2 = hydrogenselenide + L-alanine + A + H(+). Its pathway is cofactor biosynthesis; iron-sulfur cluster biosynthesis. Cysteine desulfurases mobilize the sulfur from L-cysteine to yield L-alanine, an essential step in sulfur metabolism for biosynthesis of a variety of sulfur-containing biomolecules. Component of the suf operon, which is activated and required under specific conditions such as oxidative stress and iron limitation. Acts as a potent selenocysteine lyase in vitro, that mobilizes selenium from L-selenocysteine. Selenocysteine lyase activity is however unsure in vivo. This is Cysteine desulfurase from Escherichia coli (strain K12 / MC4100 / BW2952).